The following is a 37-amino-acid chain: Cytochrome b6-f complex subunit 5 (37 aa).

The helical transmembrane segment at 5 to 25 threads the bilayer; it reads LLSGIVLGLVPVTIAGLFVTA.

Belongs to the PetG family. The 4 large subunits of the cytochrome b6-f complex are cytochrome b6, subunit IV (17 kDa polypeptide, PetD), cytochrome f and the Rieske protein, while the 4 small subunits are PetG, PetL, PetM and PetN. The complex functions as a dimer.

The protein resides in the plastid. Its subcellular location is the chloroplast thylakoid membrane. Functionally, component of the cytochrome b6-f complex, which mediates electron transfer between photosystem II (PSII) and photosystem I (PSI), cyclic electron flow around PSI, and state transitions. PetG is required for either the stability or assembly of the cytochrome b6-f complex. The polypeptide is Cytochrome b6-f complex subunit 5 (Chlamydomonas moewusii (Chlamydomonas eugametos)).